The primary structure comprises 455 residues: Phosphomethylpyrimidine synthase (455 aa).

Residues N80, M109, Y139, H175, 195 to 197 (SRG), 236 to 239 (DALR), and E275 contribute to the substrate site. Position 279 (H279) interacts with Zn(2+). Position 302 (Y302) interacts with substrate. H343 provides a ligand contact to Zn(2+). Residues C423, C426, and C431 each contribute to the [4Fe-4S] cluster site.

Belongs to the ThiC family. [4Fe-4S] cluster serves as cofactor.

The enzyme catalyses 5-amino-1-(5-phospho-beta-D-ribosyl)imidazole + S-adenosyl-L-methionine = 4-amino-2-methyl-5-(phosphooxymethyl)pyrimidine + CO + 5'-deoxyadenosine + formate + L-methionine + 3 H(+). It functions in the pathway cofactor biosynthesis; thiamine diphosphate biosynthesis. Catalyzes the synthesis of the hydroxymethylpyrimidine phosphate (HMP-P) moiety of thiamine from aminoimidazole ribotide (AIR) in a radical S-adenosyl-L-methionine (SAM)-dependent reaction. The chain is Phosphomethylpyrimidine synthase from Synechococcus sp. (strain JA-3-3Ab) (Cyanobacteria bacterium Yellowstone A-Prime).